A 291-amino-acid chain; its full sequence is MTWPLPDRLSINSLSGTPAVDLSSFTDFLRRQAPELLPASISGGAPLAGGDAQLPHGTTIVALKYPGGVVMAGDRRSTQGNMISGRDVRKVYITDDYTATGIAGTAAVAVEFARLYAVELEHYEKLEGVPLTFAGKINRLAIMVRGNLAAAMQGLLALPLLAGYDIHASDPQSAGRIVSFDAAGGWNIEEEGYQAVGSGSLFAKSSMKKLYSQVTDGDSGLRVAVEALYDAADDDSATGGPDLVRGIFPTAVIIDADGAVDVPESRIAELARAIIESRSGADTFGSDGGEK.

A propeptide spans 1-57 (MTWPLPDRLSINSLSGTPAVDLSSFTDFLRRQAPELLPASISGGAPLAGGDAQLPHG) (removed in mature form; by autocatalysis). Catalysis depends on threonine 58, which acts as the Nucleophile.

Belongs to the peptidase T1B family. As to quaternary structure, the 20S proteasome core is composed of 14 alpha and 14 beta subunits that assemble into four stacked heptameric rings, resulting in a barrel-shaped structure. The two inner rings, each composed of seven catalytic beta subunits, are sandwiched by two outer rings, each composed of seven alpha subunits. The catalytic chamber with the active sites is on the inside of the barrel. Has a gated structure, the ends of the cylinder being occluded by the N-termini of the alpha-subunits. Is capped by the proteasome-associated ATPase, ARC.

The protein localises to the cytoplasm. The enzyme catalyses Cleavage of peptide bonds with very broad specificity.. It participates in protein degradation; proteasomal Pup-dependent pathway. With respect to regulation, the formation of the proteasomal ATPase ARC-20S proteasome complex, likely via the docking of the C-termini of ARC into the intersubunit pockets in the alpha-rings, may trigger opening of the gate for substrate entry. Interconversion between the open-gate and close-gate conformations leads to a dynamic regulation of the 20S proteasome proteolysis activity. Functionally, component of the proteasome core, a large protease complex with broad specificity involved in protein degradation. This chain is Proteasome subunit beta, found in Mycobacterium tuberculosis (strain ATCC 25177 / H37Ra).